The chain runs to 150 residues: MQIILLEKIGGLGNLGDIVTVKNGYARNFLIPAGKAKRATEANMKEFEARRAELEAKQAEILADARARQEKLDGQTVTVAQKAGVDGRLFGSVTNADIAAAIVAAGIEAVKANVRLPNGPLKAVGEYEVEVALHTDAVAKITVAVVAATE.

The protein belongs to the bacterial ribosomal protein bL9 family.

Functionally, binds to the 23S rRNA. In Neisseria meningitidis serogroup C (strain 053442), this protein is Large ribosomal subunit protein bL9.